A 233-amino-acid polypeptide reads, in one-letter code: Hydroxyacylglutathione hydrolase (233 aa).

The Zn(2+) site is built by His-52, His-54, Asp-56, His-57, His-108, Asp-125, and His-163.

The protein belongs to the metallo-beta-lactamase superfamily. Glyoxalase II family. As to quaternary structure, monomer. Zn(2+) is required as a cofactor.

It carries out the reaction an S-(2-hydroxyacyl)glutathione + H2O = a 2-hydroxy carboxylate + glutathione + H(+). Its pathway is secondary metabolite metabolism; methylglyoxal degradation; (R)-lactate from methylglyoxal: step 2/2. Thiolesterase that catalyzes the hydrolysis of S-D-lactoyl-glutathione to form glutathione and D-lactic acid. The protein is Hydroxyacylglutathione hydrolase of Histophilus somni (strain 129Pt) (Haemophilus somnus).